Consider the following 226-residue polypeptide: UPF0502 protein azo0627 (226 aa).

This sequence belongs to the UPF0502 family.

In Azoarcus sp. (strain BH72), this protein is UPF0502 protein azo0627.